The chain runs to 142 residues: Transcription antitermination protein NusB (142 aa).

The protein belongs to the NusB family.

Involved in transcription antitermination. Required for transcription of ribosomal RNA (rRNA) genes. Binds specifically to the boxA antiterminator sequence of the ribosomal RNA (rrn) operons. The sequence is that of Transcription antitermination protein NusB from Thermobifida fusca (strain YX).